The chain runs to 431 residues: Glucose-1-phosphate adenylyltransferase (431 aa).

Residues glycine 163, 178–179, and serine 210 contribute to the alpha-D-glucose 1-phosphate site; that span reads EK.

Belongs to the bacterial/plant glucose-1-phosphate adenylyltransferase family. As to quaternary structure, homotetramer.

The catalysed reaction is alpha-D-glucose 1-phosphate + ATP + H(+) = ADP-alpha-D-glucose + diphosphate. The protein operates within glycan biosynthesis; glycogen biosynthesis. Involved in the biosynthesis of ADP-glucose, a building block required for the elongation reactions to produce glycogen. Catalyzes the reaction between ATP and alpha-D-glucose 1-phosphate (G1P) to produce pyrophosphate and ADP-Glc. This Synechococcus sp. (strain WH7803) protein is Glucose-1-phosphate adenylyltransferase.